The chain runs to 155 residues: uncharacterized protein (155 aa).

The segment at 56–79 (GEKRPTHRRPYRRTKPYPKRPSML) is disordered. The segment covering 60-73 (PTHRRPYRRTKPYP) has biased composition (basic residues).

This is an uncharacterized protein from Sinorhizobium fredii (strain NBRC 101917 / NGR234).